A 419-amino-acid chain; its full sequence is Inward rectifier potassium channel 16 (419 aa).

Over 1–67 the chain is Cytoplasmic; the sequence is MSYYGSSYRI…MVDIFTTLVD (67 aa). The chain crosses the membrane as a helical span at residues 68 to 94; it reads TKWRHMFVVFSLSYILSWLIFGSIFWL. The Extracellular portion of the chain corresponds to 95 to 117; that stretch reads IALHHGDLLSDPDITPCVDNVHS. Positions 118–134 form an intramembrane region, helical; Pore-forming; sequence FTAAFLFSLETQTTIGY. The short motif at 131–136 is the Selectivity filter element; that stretch reads TIGYGY. Residues 135–143 lie on the Extracellular side of the membrane; it reads GYRCVTEEC. Residues 144 to 171 form a helical membrane-spanning segment; the sequence is SVAVLTVILQSILSCIINTFIIGAALAK. Residues 172-419 are Cytoplasmic-facing; that stretch reads MATARKRAQT…LNRISMESQM (248 aa). 3 positions are modified to phosphoserine: Ser358, Ser374, and Ser376.

It belongs to the inward rectifier-type potassium channel (TC 1.A.2.1) family. KCNJ16 subfamily. It forms heteromeric channels with Kir4.1/KCNJ10; this interaction is required for KCNJ16 localization to the basolateral membrane in kidney cells. As a heteromer with KCNJ10, may interact with MAGI1; this interaction may facilitate KCNJ10/KCNJ16 potassium channel expression at the basolateral membrane in kidney cells. May form heteromers with Kir2.1/KCNJ2. Can form heteromeric channels with Kir4.2/KCNJ15. Expressed in the brain, testis, liver, spleen, kidney, submaxillary gland and adrenals. In the kidney, expressed in the epithelial cells of both proximal and distal convoluted tubules, in the endothelial cells surrounding glomerular capillaries and in the flattened parietal layer of Bowman's capsule.

The protein resides in the membrane. It is found in the basolateral cell membrane. It catalyses the reaction K(+)(in) = K(+)(out). Its activity is regulated as follows. Channel activity is strongly regulated by variations of cytosolic pH; channels are activated by alkaline and inhibited by acidic pH values. Activated by phosphatidylinositol 4,5 biphosphate (PtdIns(4,5)P2). Its function is as follows. Inward rectifier potassium channels are characterized by a greater tendency to allow potassium to flow into the cell rather than out of it. Their voltage dependence is regulated by the concentration of extracellular potassium; as external potassium is raised, the voltage range of the channel opening shifts to more positive voltages. The inward rectification is mainly due to the blockage of outward current by internal magnesium. KCNJ16 may be involved in the regulation of fluid and pH balance. In the kidney, together with KCNJ10, mediates basolateral K(+) recycling in distal tubules; this process is critical for Na(+) reabsorption at the tubules. In Rattus norvegicus (Rat), this protein is Inward rectifier potassium channel 16 (Kcnj16).